We begin with the raw amino-acid sequence, 819 residues long: Advillin (819 aa).

Positions 1–731 (MSLSSAFRTV…YEQLKNELGD (731 aa)) are core. The Gelsolin-like 1 repeat unit spans residues 24 to 105 (MELVLVPLSA…VQYHESDTFR (82 aa)). Tyr-85 bears the Phosphotyrosine mark. A 1,2-diacyl-sn-glycero-3-phospho-(1D-myo-inositol-4,5-bisphosphate) is bound by residues 109–116 (KRGIIYKK) and 135–143 (RLLHVKGKR). Gelsolin-like repeat units lie at residues 144 to 215 (NIRA…KEAA), 265 to 339 (TEVA…SAMF), 407 to 486 (LVPV…RHFM), 524 to 592 (NTKA…PEFW), and 631 to 704 (TEVT…PPTF). The tract at residues 628 to 819 (FLVTEVTDFT…LQLKKEAGLF (192 aa)) is required for interaction with F-actin. The segment at 731–819 (DATAIVRITT…LQLKKEAGLF (89 aa)) is headpiece. The HP domain maps to 753–819 (ESGPKYYPVE…LQLKKEAGLF (67 aa)). Tyr-758 carries the post-translational modification Phosphotyrosine.

This sequence belongs to the villin/gelsolin family. As to quaternary structure, associates (via C-terminus) with actin. Interacts with F-actin. Interacts with SCARF1; the interaction occurs in embryonic dorsal root ganglions at 18 dpc and induces neurite-like outgrowth. Interacts with PLCE1. Interacts with ACTR2 and ACTR3; associates with the ARP2/3 complex. Expressed in dorsal root ganglion (DRG) neurons and superior cervical ganglia (SCG). Expressed in podocytes.

The protein resides in the cytoplasm. The protein localises to the cytoskeleton. It localises to the cell projection. Its subcellular location is the neuron projection. It is found in the axon. The protein resides in the lamellipodium. The protein localises to the cell junction. It localises to the focal adhesion. Functionally, ca(2+)-regulated actin-binding protein which plays an important role in actin bundling. May have a unique function in the morphogenesis of neuronal cells which form ganglia. Required for SREC1-mediated regulation of neurite-like outgrowth. Plays a role in regenerative sensory axon outgrowth and remodeling processes after peripheral injury in neonates. Involved in the formation of long fine actin-containing filopodia-like structures in fibroblast. Plays a role in ciliogenesis. In podocytes, controls lamellipodia formation through the regulation of EGF-induced diacylglycerol generation by PLCE1 and ARP2/3 complex assembly. This chain is Advillin, found in Rattus norvegicus (Rat).